The following is a 597-amino-acid chain: Arginine--tRNA ligase (597 aa).

The 'HIGH' region motif lies at 125 to 135 (PNTNKPLHLGH).

The protein belongs to the class-I aminoacyl-tRNA synthetase family. In terms of assembly, monomer.

The protein localises to the cytoplasm. It catalyses the reaction tRNA(Arg) + L-arginine + ATP = L-arginyl-tRNA(Arg) + AMP + diphosphate. This Bacteroides fragilis (strain YCH46) protein is Arginine--tRNA ligase.